The primary structure comprises 265 residues: Ribonuclease 3 (265 aa).

Positions L34–Q157 constitute an RNase III domain. E70 serves as a coordination point for Mg(2+). The active site involves D74. Mg(2+)-binding residues include D143 and E146. The active site involves E146. Positions D185–K256 constitute a DRBM domain.

The protein belongs to the ribonuclease III family. As to quaternary structure, homodimer. The cofactor is Mg(2+).

It is found in the cytoplasm. The enzyme catalyses Endonucleolytic cleavage to 5'-phosphomonoester.. Its function is as follows. Digests double-stranded RNA. Involved in the processing of primary rRNA transcript to yield the immediate precursors to the large and small rRNAs (23S and 16S). Processes some mRNAs, and tRNAs when they are encoded in the rRNA operon. Processes pre-crRNA and tracrRNA of type II CRISPR loci if present in the organism. This chain is Ribonuclease 3, found in Psychrobacter arcticus (strain DSM 17307 / VKM B-2377 / 273-4).